The following is a 449-amino-acid chain: Maltoporin (449 aa).

The signal sequence occupies residues 1 to 24 (MITLRKLPLAVAVAAGVMSAQAMA).

Belongs to the porin LamB (TC 1.B.3) family. In terms of assembly, homotrimer formed of three 18-stranded antiparallel beta-barrels, containing three independent channels.

It localises to the cell outer membrane. It catalyses the reaction beta-maltose(in) = beta-maltose(out). Involved in the transport of maltose and maltodextrins. This chain is Maltoporin, found in Citrobacter koseri (strain ATCC BAA-895 / CDC 4225-83 / SGSC4696).